Reading from the N-terminus, the 508-residue chain is Photosystem II CP47 reaction center protein (508 aa).

The next 6 helical transmembrane spans lie at 21–36 (AVHI…WAGS), 101–115 (IVFS…IWHW), 140–156 (GIHL…FGAF), 203–218 (IAAG…FHLS), 237–252 (VLSS…AFVV), and 457–472 (SFAL…HGAR).

It belongs to the PsbB/PsbC family. PsbB subfamily. In terms of assembly, PSII is composed of 1 copy each of membrane proteins PsbA, PsbB, PsbC, PsbD, PsbE, PsbF, PsbH, PsbI, PsbJ, PsbK, PsbL, PsbM, PsbT, PsbX, PsbY, PsbZ, Psb30/Ycf12, at least 3 peripheral proteins of the oxygen-evolving complex and a large number of cofactors. It forms dimeric complexes. It depends on Binds multiple chlorophylls. PSII binds additional chlorophylls, carotenoids and specific lipids. as a cofactor.

Its subcellular location is the plastid. The protein resides in the chloroplast thylakoid membrane. One of the components of the core complex of photosystem II (PSII). It binds chlorophyll and helps catalyze the primary light-induced photochemical processes of PSII. PSII is a light-driven water:plastoquinone oxidoreductase, using light energy to abstract electrons from H(2)O, generating O(2) and a proton gradient subsequently used for ATP formation. In Ranunculus macranthus (Large buttercup), this protein is Photosystem II CP47 reaction center protein.